Here is a 151-residue protein sequence, read N- to C-terminus: Austinoid biosynthesis clusters protein F (151 aa).

Belongs to the trt14 isomerase family. As to quaternary structure, homodimer.

The protein operates within secondary metabolite biosynthesis; terpenoid biosynthesis. In terms of biological role, part of the gene cluster B that mediates the biosynthesis of the fungal meroterpenoid acetoxydehydroaustin. The first step of the pathway is the synthesis of 3,5-dimethylorsellinic acid by the polyketide synthase ausA. 3,5-dimethylorsellinic acid is then prenylated by the polyprenyl transferase ausN. Further epoxidation by the FAD-dependent monooxygenase ausM and cyclization by the probable terpene cyclase ausL lead to the formation of protoaustinoid A. Protoaustinoid A is then oxidized to spiro-lactone preaustinoid A3 by the combined action of the FAD-binding monooxygenases ausB and ausC, and the dioxygenase ausE. Acid-catalyzed keto-rearrangement and ring contraction of the tetraketide portion of preaustinoid A3 by ausJ lead to the formation of preaustinoid A4. The aldo-keto reductase ausK, with the help of ausH, is involved in the next step by transforming preaustinoid A4 into isoaustinone which is in turn hydroxylated by the P450 monooxygenase ausI to form austinolide. The cytochrome P450 monooxygenase ausG then modifies austinolide to austinol. Austinol is further acetylated to austin by the O-acetyltransferase ausP, which spontaneously changes to dehydroaustin. The cytochrome P450 monooxygenase then converts dehydroaustin is into 7-dehydrodehydroaustin. The hydroxylation catalyzed by ausR permits the second O-acetyltransferase ausQ to add an additional acetyl group to the molecule, leading to the formation of acetoxydehydroaustin. Due to genetic rearrangements of the clusters and the subsequent loss of some enzymes, the end product of the Penicillium brasilianum austinoid biosynthesis clusters is acetoxydehydroaustin. This chain is Austinoid biosynthesis clusters protein F, found in Penicillium brasilianum.